The primary structure comprises 363 residues: Peptide chain release factor 2 (363 aa).

Gln-251 is subject to N5-methylglutamine.

It belongs to the prokaryotic/mitochondrial release factor family. Post-translationally, methylated by PrmC. Methylation increases the termination efficiency of RF2.

The protein resides in the cytoplasm. Its function is as follows. Peptide chain release factor 2 directs the termination of translation in response to the peptide chain termination codons UGA and UAA. In Helicobacter pylori (strain HPAG1), this protein is Peptide chain release factor 2.